A 307-amino-acid polypeptide reads, in one-letter code: Pantothenate kinase (307 aa).

90–97 is a binding site for ATP; the sequence is GSVAVGKS.

The protein belongs to the prokaryotic pantothenate kinase family.

It is found in the cytoplasm. It carries out the reaction (R)-pantothenate + ATP = (R)-4'-phosphopantothenate + ADP + H(+). It participates in cofactor biosynthesis; coenzyme A biosynthesis; CoA from (R)-pantothenate: step 1/5. In Enterococcus faecalis (strain ATCC 700802 / V583), this protein is Pantothenate kinase.